The primary structure comprises 414 residues: Protein phosphatase 2C homolog 3 (414 aa).

The PPM-type phosphatase domain occupies 23–288; the sequence is LYGLSSMQGW…DNMTVCIVAL (266 aa). Positions 62, 63, 230, and 279 each coordinate Mn(2+). Disordered regions lie at residues 313 to 368 and 380 to 414; these read APPE…TNGS and FPHK…SAAD. The span at 350–363 shows a compositional bias: basic and acidic residues; sequence GYDKDANENSKEDD. The span at 390 to 400 shows a compositional bias: polar residues; that stretch reads SSETDIVNSNK. The segment covering 401-414 has biased composition (basic and acidic residues); it reads DVADDHKEAVSAAD.

The protein belongs to the PP2C family. Monomer. The cofactor is Mg(2+). Mn(2+) serves as cofactor.

The protein localises to the cytoplasm. It is found in the nucleus. The catalysed reaction is O-phospho-L-seryl-[protein] + H2O = L-seryl-[protein] + phosphate. The enzyme catalyses O-phospho-L-threonyl-[protein] + H2O = L-threonyl-[protein] + phosphate. Dephosphorylating regulator for many key proteins. Has an important role in osmotic stability and cell shape control. It may negatively regulate the osmosensing signal transmitted through wis1 map kinase. The protein is Protein phosphatase 2C homolog 3 (ptc3) of Schizosaccharomyces pombe (strain 972 / ATCC 24843) (Fission yeast).